A 204-amino-acid polypeptide reads, in one-letter code: MTTGKFITFEGIDGAGKSTHLSFVAELLCERKKTVVVTREPGGTSLGEELREILLHEKMHLETEALLMFAARREHIAQVIAPALERGDWVISDRFTDATFAYQGGGRKLDRAKLNALEQWVHPHLQPHLTLLFDVPLDVARARLDATRTLDKFEQEKAEFFAATRAEYLRRAAEFPQRFHVIDSTRSIAAIQEQLRAIVAGIDS.

11–18 (GIDGAGKS) lines the ATP pocket.

It belongs to the thymidylate kinase family.

It carries out the reaction dTMP + ATP = dTDP + ADP. Phosphorylation of dTMP to form dTDP in both de novo and salvage pathways of dTTP synthesis. In Janthinobacterium sp. (strain Marseille) (Minibacterium massiliensis), this protein is Thymidylate kinase.